Consider the following 236-residue polypeptide: tRNA1(Val) (adenine(37)-N6)-methyltransferase (236 aa).

Belongs to the methyltransferase superfamily. tRNA (adenine-N(6)-)-methyltransferase family.

It is found in the cytoplasm. The catalysed reaction is adenosine(37) in tRNA1(Val) + S-adenosyl-L-methionine = N(6)-methyladenosine(37) in tRNA1(Val) + S-adenosyl-L-homocysteine + H(+). Functionally, specifically methylates the adenine in position 37 of tRNA(1)(Val) (anticodon cmo5UAC). The sequence is that of tRNA1(Val) (adenine(37)-N6)-methyltransferase from Aeromonas hydrophila subsp. hydrophila (strain ATCC 7966 / DSM 30187 / BCRC 13018 / CCUG 14551 / JCM 1027 / KCTC 2358 / NCIMB 9240 / NCTC 8049).